The following is a 238-amino-acid chain: Ribosomal RNA small subunit methyltransferase G (238 aa).

S-adenosyl-L-methionine is bound by residues Gly-78, Phe-83, Ala-129–Glu-130, and Arg-148. Positions Lys-217–Lys-238 are disordered.

This sequence belongs to the methyltransferase superfamily. RNA methyltransferase RsmG family.

It localises to the cytoplasm. Its function is as follows. Specifically methylates the N7 position of a guanine in 16S rRNA. The chain is Ribosomal RNA small subunit methyltransferase G from Lactococcus lactis subsp. cremoris (strain MG1363).